We begin with the raw amino-acid sequence, 181 residues long: Ribosome maturation factor RimM (181 aa).

One can recognise a PRC barrel domain in the interval 100-177 (EEGFYWMQLI…QIQVDWQLED (78 aa)).

Belongs to the RimM family. In terms of assembly, binds ribosomal protein uS19.

The protein localises to the cytoplasm. Functionally, an accessory protein needed during the final step in the assembly of 30S ribosomal subunit, possibly for assembly of the head region. Essential for efficient processing of 16S rRNA. May be needed both before and after RbfA during the maturation of 16S rRNA. It has affinity for free ribosomal 30S subunits but not for 70S ribosomes. The polypeptide is Ribosome maturation factor RimM (Hydrogenovibrio crunogenus (strain DSM 25203 / XCL-2) (Thiomicrospira crunogena)).